Here is an 815-residue protein sequence, read N- to C-terminus: Lon protease 1 (815 aa).

The Lon N-terminal domain occupies 14–211 (IAILPLLGTV…KLNEVLTREL (198 aa)). Position 370–377 (370–377 (GPPGVGKT)) interacts with ATP. The region spanning 606 to 787 (TDRPGIVTGL…GQVIELALRA (182 aa)) is the Lon proteolytic domain. Active-site residues include Ser693 and Lys736.

It belongs to the peptidase S16 family. As to quaternary structure, homohexamer. Organized in a ring with a central cavity.

The protein resides in the cytoplasm. It carries out the reaction Hydrolysis of proteins in presence of ATP.. In terms of biological role, ATP-dependent serine protease that mediates the selective degradation of mutant and abnormal proteins as well as certain short-lived regulatory proteins. Required for cellular homeostasis and for survival from DNA damage and developmental changes induced by stress. Degrades polypeptides processively to yield small peptide fragments that are 5 to 10 amino acids long. Binds to DNA in a double-stranded, site-specific manner. This is Lon protease 1 from Herpetosiphon aurantiacus (strain ATCC 23779 / DSM 785 / 114-95).